The chain runs to 596 residues: Myosin light chain kinase 2, skeletal/cardiac muscle (596 aa).

The disordered stretch occupies residues 1 to 224 (MATENGAVEL…AGQAKMQGDT (224 aa)). N-acetylalanine is present on alanine 2. The span at 40 to 63 (DPKKAPDPPTLKKDAKAPASEKGD) shows a compositional bias: basic and acidic residues. Residues 88–104 (EGSAGPPAALPQQTATP) show a composition bias toward low complexity. Phosphoserine occurs at positions 143, 149, and 151. Basic and acidic residues predominate over residues 189-209 (RPAKAEEGKNILAESQKEVGE). The Protein kinase domain occupies 285–540 (MNSKEALGGG…AAQCLAHPWL (256 aa)). ATP is bound by residues 291–299 (LGGGKFGAV) and lysine 314. Aspartate 406 serves as the catalytic Proton acceptor. Threonine 445 is modified (phosphothreonine). The tract at residues 574–586 (IAVSAANRFKKIS) is calmodulin-binding.

This sequence belongs to the protein kinase superfamily. CAMK Ser/Thr protein kinase family. In terms of assembly, may interact with centrin. Heart and skeletal muscles. Increased expression in the apical tissue compared to the interventricular septal tissue.

It is found in the cytoplasm. It carries out the reaction L-seryl-[myosin light chain] + ATP = O-phospho-L-seryl-[myosin light chain] + ADP + H(+). The enzyme catalyses L-threonyl-[myosin light chain] + ATP = O-phospho-L-threonyl-[myosin light chain] + ADP + H(+). Implicated in the level of global muscle contraction and cardiac function. Phosphorylates a specific serine in the N-terminus of a myosin light chain. The protein is Myosin light chain kinase 2, skeletal/cardiac muscle (MYLK2) of Homo sapiens (Human).